The chain runs to 341 residues: tRNA N6-adenosine threonylcarbamoyltransferase (341 aa).

Fe cation is bound by residues His-111 and His-115. Substrate contacts are provided by residues 134 to 138 (LVSGG), Asp-167, Gly-180, and Asn-276. A Fe cation-binding site is contributed by Asp-304.

This sequence belongs to the KAE1 / TsaD family. The cofactor is Fe(2+).

The protein resides in the cytoplasm. It catalyses the reaction L-threonylcarbamoyladenylate + adenosine(37) in tRNA = N(6)-L-threonylcarbamoyladenosine(37) in tRNA + AMP + H(+). Functionally, required for the formation of a threonylcarbamoyl group on adenosine at position 37 (t(6)A37) in tRNAs that read codons beginning with adenine. Is involved in the transfer of the threonylcarbamoyl moiety of threonylcarbamoyl-AMP (TC-AMP) to the N6 group of A37, together with TsaE and TsaB. TsaD likely plays a direct catalytic role in this reaction. The sequence is that of tRNA N6-adenosine threonylcarbamoyltransferase from Pseudomonas aeruginosa (strain LESB58).